A 124-amino-acid chain; its full sequence is MAVSLGASSRRRTAKLRRHVRVRKKVAGTPSRPRLVVTRSSRHIYAQVIDDVAGHTLASASTLDVSLRGGEGDKTEQARKVGALVAERAKAAGIAAVVFDRGGRTYSGRIAALADAARGNGLDF.

The protein belongs to the universal ribosomal protein uL18 family. Part of the 50S ribosomal subunit; part of the 5S rRNA/L5/L18/L25 subcomplex. Contacts the 5S and 23S rRNAs.

In terms of biological role, this is one of the proteins that bind and probably mediate the attachment of the 5S RNA into the large ribosomal subunit, where it forms part of the central protuberance. The sequence is that of Large ribosomal subunit protein uL18 from Frankia casuarinae (strain DSM 45818 / CECT 9043 / HFP020203 / CcI3).